The primary structure comprises 116 residues: MAEEAQVIACHTVQEWNEKFQKAKDSGKLIVIDFTASWCGPCRVITPYVSELAKKFPHVAFFKVDVDDLKDVAEEYKVEAMPSFVILKEGQEVERIVGARKDELLHKIAVHAPITA.

The 114-residue stretch at 2–115 folds into the Thioredoxin domain; it reads AEEAQVIACH…HKIAVHAPIT (114 aa). Active-site nucleophile residues include cysteine 39 and cysteine 42. Cysteines 39 and 42 form a disulfide.

Belongs to the thioredoxin family. Plant H-type subfamily.

It localises to the cytoplasm. In terms of biological role, participates in various redox reactions through the reversible oxidation of the active center dithiol to a disulfide. The H form is known to activate a number of cytosolic enzymes. This Fagopyrum esculentum (Common buckwheat) protein is Thioredoxin H-type.